The primary structure comprises 518 residues: uncharacterized protein (518 aa).

14 helical membrane passes run 13–33 (WAISLFTIGVFMAALDNGIIS), 49–69 (WGSWGITLYTLGLSVSVPIVG), 86–106 (CLFGLGSLLVALSQSFPLFLI), 109–129 (LIQALGGGGIFIIGSSHILAT), 141–161 (LLGAMNGMAAVLGPNIGSFLL), 169–189 (WLFLINLPIAVLLVVFGACFI), 202–222 (AAGIFLLSLSILAVMYGMTNL), 231–251 (LGNPEVYGCIIFGILCFAALI), 280–300 (LIIGLLSGGLLAAVIFIPSYV), 312–332 (GYWMTPLALASGIGAWLGGAL), 341–361 (TVILSGIISCAGFALFPLWVT), 365–385 (EFVIASVAAGIGFGFLLGAPL), 410–430 (IGLTLAPTLYAGFITAGFDQI), and 493–513 (LYAAAAVVSLLVIAAISIPAF).

Belongs to the major facilitator superfamily. TCR/Tet family.

It is found in the cell membrane. This is an uncharacterized protein from Bacillus subtilis (strain 168).